The primary structure comprises 1124 residues: DNA-directed RNA polymerase subunit Rpo2 (1124 aa).

Residues Cys-1061, Cys-1064, Cys-1079, and His-1082 each contribute to the Zn(2+) site.

Belongs to the RNA polymerase beta chain family. In terms of assembly, part of the 13-subunit RNA polymerase complex. Zn(2+) serves as cofactor.

It localises to the cytoplasm. It carries out the reaction RNA(n) + a ribonucleoside 5'-triphosphate = RNA(n+1) + diphosphate. Its function is as follows. DNA-dependent RNA polymerase (RNAP) catalyzes the transcription of DNA into RNA using the four ribonucleoside triphosphates as substrates. This subunit is involved in DNA promoter recognition. The protein is DNA-directed RNA polymerase subunit Rpo2 of Saccharolobus solfataricus (strain ATCC 35092 / DSM 1617 / JCM 11322 / P2) (Sulfolobus solfataricus).